The following is a 427-amino-acid chain: F-box protein At2g16450 (427 aa).

In terms of domain architecture, F-box spans methionine 1–leucine 45.

This chain is F-box protein At2g16450, found in Arabidopsis thaliana (Mouse-ear cress).